The following is a 331-amino-acid chain: Ferredoxin--NADP reductase (331 aa).

T20, E39, Q47, Y52, V92, F126, D287, and S328 together coordinate FAD.

Belongs to the ferredoxin--NADP reductase type 2 family. As to quaternary structure, homodimer. It depends on FAD as a cofactor.

The catalysed reaction is 2 reduced [2Fe-2S]-[ferredoxin] + NADP(+) + H(+) = 2 oxidized [2Fe-2S]-[ferredoxin] + NADPH. This is Ferredoxin--NADP reductase from Bacillus cereus (strain ZK / E33L).